A 250-amino-acid polypeptide reads, in one-letter code: 2,3-bisphosphoglycerate-dependent phosphoglycerate mutase (250 aa).

Substrate is bound by residues 10–17, 23–24, arginine 62, 89–92, lysine 100, 116–117, and 185–186; these read RHGESQWN, TG, ERHY, RR, and GN. Catalysis depends on histidine 11, which acts as the Tele-phosphohistidine intermediate. Glutamate 89 acts as the Proton donor/acceptor in catalysis.

This sequence belongs to the phosphoglycerate mutase family. BPG-dependent PGAM subfamily. As to quaternary structure, homodimer.

It catalyses the reaction (2R)-2-phosphoglycerate = (2R)-3-phosphoglycerate. It functions in the pathway carbohydrate degradation; glycolysis; pyruvate from D-glyceraldehyde 3-phosphate: step 3/5. Functionally, catalyzes the interconversion of 2-phosphoglycerate and 3-phosphoglycerate. This Cronobacter sakazakii (strain ATCC BAA-894) (Enterobacter sakazakii) protein is 2,3-bisphosphoglycerate-dependent phosphoglycerate mutase.